The primary structure comprises 516 residues: MHYSIIRKLVTAPKLANVPKRKWKSVVGLEVHAQIASASKLFSGSGTSFGAPLNSSVAYFDASIPGTLPVLNRKCVESGIKTSLALGCRVNEVSMFDRKHYFYADLPNGYQITQQRAALANDGKMTFPVITPGKKVYYKTAKLLQLQLEQDSGKSLHDDYLKRSLVDLNRAGLPLMELVFAPDLETGEEAASLVKELILILRRLQTCSCKMEEGALRVDANISIHQEGDPLGVRTEVKNIGSVRSISQAITYEINRQLETVANGGVITNETRNWDAENRRTVAMRDKEVLQDYRFMPEPNLPPLHVNLKPGSMSTEDLLSVAALSEEIPELPEDTRQRLVEQHNLNAETAIILVNEPILLDHFLSITRSLSDLPNKVICNFLINDLLTYCNKLNLDVEDCSIKADDLKDILMSLHAELINLQAARQLVDLLHNNPKAKVSELIELHSLQQICSPDEIENLCQLAIANQAKAVEQYQKGKAKALFAIAGEVAKLSSQKANMKLVVQRLEKLLKPTNK.

It belongs to the GatB/GatE family. GatB subfamily. Subunit of the heterotrimeric GatCAB amidotransferase (AdT) complex, composed of A, B and C subunits.

It is found in the mitochondrion. It catalyses the reaction L-glutamyl-tRNA(Gln) + L-glutamine + ATP + H2O = L-glutaminyl-tRNA(Gln) + L-glutamate + ADP + phosphate + H(+). Allows the formation of correctly charged Gln-tRNA(Gln) through the transamidation of misacylated Glu-tRNA(Gln) in the mitochondria. The reaction takes place in the presence of glutamine and ATP through an activated gamma-phospho-Glu-tRNA(Gln). This is Glutamyl-tRNA(Gln) amidotransferase subunit B, mitochondrial from Drosophila melanogaster (Fruit fly).